Consider the following 352-residue polypeptide: DNA-directed RNA polymerase subunit alpha (352 aa).

An alpha N-terminal domain (alpha-NTD) region spans residues Met1–Asn226. An alpha C-terminal domain (alpha-CTD) region spans residues His243 to Leu352. Positions Asp324 to Leu352 are disordered. Over residues Ser326–Asp338 the composition is skewed to polar residues. The span at Asp340–Leu352 shows a compositional bias: acidic residues.

This sequence belongs to the RNA polymerase alpha chain family. Homodimer. The RNAP catalytic core consists of 2 alpha, 1 beta, 1 beta' and 1 omega subunit. When a sigma factor is associated with the core the holoenzyme is formed, which can initiate transcription.

It carries out the reaction RNA(n) + a ribonucleoside 5'-triphosphate = RNA(n+1) + diphosphate. DNA-dependent RNA polymerase catalyzes the transcription of DNA into RNA using the four ribonucleoside triphosphates as substrates. This is DNA-directed RNA polymerase subunit alpha from Nocardia farcinica (strain IFM 10152).